The following is a 375-amino-acid chain: F-box/kelch-repeat protein At4g39580 (375 aa).

One can recognise an F-box domain in the interval 20 to 66 (PTTNLFLPDDILLSSLSRISRLYYPTFSLVSKSFRSLIASPELYQTR). 3 Kelch repeats span residues 132-178 (NIYA…VLDG), 179-225 (KIYV…KSVG), and 229-269 (KYHL…VINN).

The polypeptide is F-box/kelch-repeat protein At4g39580 (Arabidopsis thaliana (Mouse-ear cress)).